The primary structure comprises 222 residues: N-(5'-phosphoribosyl)anthranilate isomerase (222 aa).

This sequence belongs to the TrpF family.

It carries out the reaction N-(5-phospho-beta-D-ribosyl)anthranilate = 1-(2-carboxyphenylamino)-1-deoxy-D-ribulose 5-phosphate. It participates in amino-acid biosynthesis; L-tryptophan biosynthesis; L-tryptophan from chorismate: step 3/5. The polypeptide is N-(5'-phosphoribosyl)anthranilate isomerase (Rhizobium johnstonii (strain DSM 114642 / LMG 32736 / 3841) (Rhizobium leguminosarum bv. viciae)).